We begin with the raw amino-acid sequence, 215 residues long: MSITAAMVKEIREKTGAGMMDCKKALTEASGNMEKATEILREKGLAAVAKKAGRIASEGIVESYIHGGRIGVLVEVNSETDFVAKNQEFKDFVKDVAMHIAATNPQYVKRDEVDPLIIEKEKEFLTKQALNEGKPEKIVEKMVEGRIDKFLKEICLLDQPFVKNPDVTIGDLLTEKIAKIGENLSIRRFVRFEVGEGIEKKEENFAEEVAKQMAK.

The tract at residues 80 to 83 is involved in Mg(2+) ion dislocation from EF-Tu; that stretch reads TDFV.

Belongs to the EF-Ts family.

It is found in the cytoplasm. In terms of biological role, associates with the EF-Tu.GDP complex and induces the exchange of GDP to GTP. It remains bound to the aminoacyl-tRNA.EF-Tu.GTP complex up to the GTP hydrolysis stage on the ribosome. In Alkaliphilus metalliredigens (strain QYMF), this protein is Elongation factor Ts.